Here is a 118-residue protein sequence, read N- to C-terminus: Holo-[acyl-carrier-protein] synthase (118 aa).

Aspartate 6 and glutamate 55 together coordinate Mg(2+).

It belongs to the P-Pant transferase superfamily. AcpS family. It depends on Mg(2+) as a cofactor.

The protein localises to the cytoplasm. The catalysed reaction is apo-[ACP] + CoA = holo-[ACP] + adenosine 3',5'-bisphosphate + H(+). In terms of biological role, transfers the 4'-phosphopantetheine moiety from coenzyme A to a Ser of acyl-carrier-protein. The polypeptide is Holo-[acyl-carrier-protein] synthase (Chlorobium chlorochromatii (strain CaD3)).